Consider the following 305-residue polypeptide: NADH-cytochrome b5 reductase 1 (305 aa).

A helical membrane pass occupies residues 8–28 (VLLASLGVGLLTLLGVALGAY). Residues 44 to 156 (NEKYQLRLLD…RGPSGLLTYA (113 aa)) form the FAD-binding FR-type domain. FAD contacts are provided by residues 136–166 (DSLKIGDVVEFRGPSGLLTYAGKGKFNIQPN) and 175–210 (VARNLGMIAGGTGITPMLQLIRAILKDPEDPTQCFL).

It belongs to the flavoprotein pyridine nucleotide cytochrome reductase family. FAD serves as cofactor.

It is found in the membrane. It catalyses the reaction 2 Fe(III)-[cytochrome b5] + NADH = 2 Fe(II)-[cytochrome b5] + NAD(+) + H(+). NADH-cytochrome b5 reductases are involved in desaturation and elongation of fatty acids, cholesterol biosynthesis, drug metabolism, and, in erythrocyte, methemoglobin reduction. The chain is NADH-cytochrome b5 reductase 1 (CYB5R1) from Bos taurus (Bovine).